The following is a 472-amino-acid chain: Phenylalanine--tRNA ligase, mitochondrial (472 aa).

Residues 157–160, arginine 179, 186–188, and 193–195 each bind substrate; these read SAHQ, QHY, and QLE. Lysine 202 is modified (N6-acetyllysine). Residues glutamate 287 and phenylalanine 312 each contribute to the substrate site. An FDX-ACB domain is found at 379–471; that stretch reads SKYPAVFNDI…AVQLLGVEGR (93 aa).

Belongs to the class-II aminoacyl-tRNA synthetase family. As to quaternary structure, monomer. In terms of tissue distribution, mainly expressed in the Purkinje cell of cerebellum.

Its subcellular location is the mitochondrion matrix. The protein resides in the mitochondrion. It carries out the reaction tRNA(Phe) + L-phenylalanine + ATP = L-phenylalanyl-tRNA(Phe) + AMP + diphosphate + H(+). Its function is as follows. Is responsible for the charging of tRNA(Phe) with phenylalanine in mitochondrial translation. To a lesser extent, also catalyzes direct attachment of m-Tyr (an oxidized version of Phe) to tRNA(Phe), thereby opening the way for delivery of the misacylated tRNA to the ribosome and incorporation of ROS-damaged amino acid into proteins. The sequence is that of Phenylalanine--tRNA ligase, mitochondrial (Fars2) from Rattus norvegicus (Rat).